Here is a 189-residue protein sequence, read N- to C-terminus: Movement protein (189 aa).

It belongs to the tombusvirus/aureusvirus movement protein p22 family.

It is found in the host membrane. Its function is as follows. Transports viral genome to neighboring plant cells directly through plasmosdesmata, without any budding. The movement protein allows efficient cell to cell propagation, by bypassing the host cell wall barrier. In Cymbidium ringspot virus (CymRSV), this protein is Movement protein.